The chain runs to 224 residues: Adenylate kinase (224 aa).

Residue 10-15 (GSGKST) coordinates ATP. The interval 30-59 (SSGDLIRREIERKSSLGREMEAYLSRGDLI) is NMP. AMP contacts are provided by residues Ser31, Arg36, 57–59 (DLI), 83–86 (GYPR), and Gln90. Residues 124 to 161 (GRRICPNCGAVYHVKYNPPKVPGICDVCGSELIQRADD) are LID. Arg125 lines the ATP pocket. The Zn(2+) site is built by Cys128 and Cys131. Residue 134 to 135 (VY) coordinates ATP. Zn(2+) contacts are provided by Cys148 and Cys151. Residues Arg158 and Arg169 each contribute to the AMP site. Gly197 lines the ATP pocket.

Belongs to the adenylate kinase family. In terms of assembly, monomer.

The protein localises to the cytoplasm. The catalysed reaction is AMP + ATP = 2 ADP. It functions in the pathway purine metabolism; AMP biosynthesis via salvage pathway; AMP from ADP: step 1/1. Catalyzes the reversible transfer of the terminal phosphate group between ATP and AMP. Plays an important role in cellular energy homeostasis and in adenine nucleotide metabolism. This is Adenylate kinase from Thermococcus kodakarensis (strain ATCC BAA-918 / JCM 12380 / KOD1) (Pyrococcus kodakaraensis (strain KOD1)).